Consider the following 1374-residue polypeptide: DNA-directed RNA polymerase subunit beta (1374 aa).

Belongs to the RNA polymerase beta chain family. As to quaternary structure, the RNAP catalytic core consists of 2 alpha, 1 beta, 1 beta' and 1 omega subunit. When a sigma factor is associated with the core the holoenzyme is formed, which can initiate transcription.

The enzyme catalyses RNA(n) + a ribonucleoside 5'-triphosphate = RNA(n+1) + diphosphate. Its function is as follows. DNA-dependent RNA polymerase catalyzes the transcription of DNA into RNA using the four ribonucleoside triphosphates as substrates. This is DNA-directed RNA polymerase subunit beta from Rhodopseudomonas palustris (strain TIE-1).